The following is a 434-amino-acid chain: Nicotinate phosphoribosyltransferase (434 aa).

The residue at position 242 (His242) is a Phosphohistidine; by autocatalysis.

The protein belongs to the NAPRTase family. Post-translationally, transiently phosphorylated on a His residue during the reaction cycle. Phosphorylation strongly increases the affinity for substrates and increases the rate of nicotinate D-ribonucleotide production. Dephosphorylation regenerates the low-affinity form of the enzyme, leading to product release.

The enzyme catalyses nicotinate + 5-phospho-alpha-D-ribose 1-diphosphate + ATP + H2O = nicotinate beta-D-ribonucleotide + ADP + phosphate + diphosphate. It participates in cofactor biosynthesis; NAD(+) biosynthesis; nicotinate D-ribonucleotide from nicotinate: step 1/1. Its function is as follows. Catalyzes the synthesis of beta-nicotinate D-ribonucleotide from nicotinate and 5-phospho-D-ribose 1-phosphate at the expense of ATP. This chain is Nicotinate phosphoribosyltransferase, found in Chelativorans sp. (strain BNC1).